The following is a 677-amino-acid chain: Protein PALS1 (677 aa).

A required for the correct localization of PALS1 and PATJ at cell-cell contacts and the normal formation of tight junctions and adherens junctions region spans residues 1-347 (MTTSHMNGYV…AQIKSPPIKE (347 aa)). Residues 39 to 81 (ELGARTLPVRRSAQLEKIRQQQEDRRRREEEGRSRQELDLNSS) are disordered. A compositionally biased stretch (basic and acidic residues) spans 51-76 (AQLEKIRQQQEDRRRREEEGRSRQEL). L27 domains follow at residues 121–178 (ALLE…NRPS) and 180–236 (PYPL…MQLE). A PDZ domain is found at 258–338 (IVRIEKAKDI…VLSFVLIPSA (81 aa)). Residues 347-419 (ETVVHVKAHF…PGKSFQQQRE (73 aa)) form the SH3 domain. The 182-residue stretch at 481–662 (KRPIALIGPP…SYQELLRLIN (182 aa)) folds into the Guanylate kinase-like domain. 488 to 495 (GPPNCGQN) provides a ligand contact to ATP. A disordered region spans residues 506 to 526 (PDRFAGPVPHTTRSRRDAEAN).

The protein belongs to the MAGUK family. In terms of tissue distribution, expressed in the retina and in the neural tube.

It is found in the apical cell membrane. The protein localises to the cell junction. Its subcellular location is the tight junction. Functionally, plays a role in tight junction biogenesis and in the establishment of cell polarity in epithelial cells. Also involved in adherens junction biogenesis. Required for polarized epithelial organization, cell-cell adhesion and remodeling of myocardial cells during heart tube elongation during embryogenesis. Functions in cellular patterning of the retina and development of the retinal pigmented epithelium. Also required for embryo body axis specification. In Danio rerio (Zebrafish), this protein is Protein PALS1 (pals1a).